A 508-amino-acid polypeptide reads, in one-letter code: MFS-type transporter penM (508 aa).

The interval 1–60 is disordered; that stretch reads MKDGEETPSVDGSTSASNREKLGTDLEIGPVDLSDGGKEEKVKDPNLVDWDGPDDPENPL. Positions 35–46 are enriched in basic and acidic residues; the sequence is DGGKEEKVKDPN. N-linked (GlcNAc...) asparagine glycosylation occurs at asparagine 61. The helical transmembrane segment at 73-93 threads the bilayer; sequence SIALITFLTPLGSSMFAPGVG. Asparagine 100 carries N-linked (GlcNAc...) asparagine glycosylation. A run of 6 helical transmembrane segments spans residues 108 to 128, 143 to 163, 166 to 186, 197 to 217, 225 to 245, and 299 to 319; these read SFVVSVYLLGYCFGPLIIAPL, ILYVIWTIACAFAPEIGSLVV, FFAGLAGSCPLTIGAGSIADM, AAWALGPLIGPVVGPVAGAYL, WSFYVLAMAAGAITISSLFSI, and PIVFLLSLYVGVIYGYLYLLF. The Peroxisomal targeting signal signature appears at 293 to 307; that stretch reads KMLFRSPIVFLLSLY. An N-linked (GlcNAc...) asparagine glycan is attached at asparagine 331. The next 5 membrane-spanning stretches (helical) occupy residues 335-355, 379-399, 407-427, 435-457, and 475-495; these read GAVGLTYLGLGVGSLIGLFLI, LPPMVPGAIFVPISLFMYGWT, IVPIIGTSFLGTGMMITFMCV, FTNYAASVMAANTVFRSLAGALL, and SLLGFIALAFCALPVIFWIYG.

This sequence belongs to the major facilitator superfamily.

It localises to the peroxisome membrane. MFS-type transporter involved in penicillin production, most likely through the translocation of isopenicillin N from the cytosol to the peroxisomal lumen across the peroxisomal membrane. The polypeptide is MFS-type transporter penM (Penicillium rubens (strain ATCC 28089 / DSM 1075 / NRRL 1951 / Wisconsin 54-1255) (Penicillium chrysogenum)).